The following is a 221-amino-acid chain: Deep sea actinoporin Cjtox II (221 aa).

The first 19 residues, 1–19 (MNRLIIVCLVAAMIYSTIA), serve as a signal peptide directing secretion. The propeptide occupies 20–42 (LPMKEDISNDERPISVNEEPVKK). Phosphocholine-binding residues include Ser-96, Val-129, Ser-147, Pro-149, Tyr-175, Tyr-179, and Tyr-180. A trp-rich region, which is important for the binding to lipid membrane region spans residues 147–162 (SVPYDYNWYENWWNIK). The short motif at 186–188 (KGD) is the Cell attachment site, crucial for protein stability element.

This sequence belongs to the actinoporin family. Sea anemone subfamily. In terms of assembly, octamer or nonamer in membranes. Monomer in the soluble state. Expressed in actinopharynx and in gastric filaments. Is not expressed in tentacles.

Its subcellular location is the secreted. The protein resides in the nematocyst. It is found in the target cell membrane. Its function is as follows. May be involved in digestion of prey. Pore-forming protein that forms cations-selective hydrophilic pores of around 1 nm and causes cytolysis. Pore formation is a multi-step process that involves specific recognition of membrane sphingomyelin (but neither cholesterol nor phosphatidylcholine) using aromatic rich region and adjacent phosphocholine (POC) binding site, firm binding to the membrane (mainly driven by hydrophobic interactions) accompanied by the transfer of the N-terminal region to the lipid-water interface and finally pore formation after oligomerization of monomers. Shows hemolytic activity on equine erythrocytes. Hemolysis is highly inhibited in presence of sphingomyelin, suggesting that this protein targets sphingomyelin. The protein is Deep sea actinoporin Cjtox II of Cribrinopsis japonica (Deep-sea anemone).